The sequence spans 465 residues: Tetratricopeptide repeat protein 38 (465 aa).

TPR repeat units lie at residues 104-137 (REQL…HPTD), 176-209 (SYVK…EPTD), and 248-281 (CHNY…SLQA).

The protein belongs to the TTC38 family.

This is Tetratricopeptide repeat protein 38 (Ttc38) from Mus musculus (Mouse).